A 726-amino-acid polypeptide reads, in one-letter code: Catalase-peroxidase (726 aa).

The interval 1–33 (MSTTDDTHNTLSTGKCPFHQGGHDRSAGAGTAS) is disordered. The tryptophyl-tyrosyl-methioninium (Trp-Tyr) (with M-252) cross-link spans 105–226 (WHGAGTYRSI…LGATEMGLIY (122 aa)). The Proton acceptor role is filled by His106. The segment at residues 226 to 252 (YVNPEGPDHSGEPLSAAAAIRATFGNM) is a cross-link (tryptophyl-tyrosyl-methioninium (Tyr-Met) (with W-105)). His267 provides a ligand contact to heme b.

The protein belongs to the peroxidase family. Peroxidase/catalase subfamily. As to quaternary structure, homodimer or homotetramer. It depends on heme b as a cofactor. Post-translationally, formation of the three residue Trp-Tyr-Met cross-link is important for the catalase, but not the peroxidase activity of the enzyme.

It catalyses the reaction H2O2 + AH2 = A + 2 H2O. The enzyme catalyses 2 H2O2 = O2 + 2 H2O. Bifunctional enzyme with both catalase and broad-spectrum peroxidase activity. This is Catalase-peroxidase from Salmonella typhi.